Here is a 219-residue protein sequence, read N- to C-terminus: Thiamine-phosphate synthase (219 aa).

Residues 44–48 (QFREK) and Asn79 each bind 4-amino-2-methyl-5-(diphosphooxymethyl)pyrimidine. Mg(2+)-binding residues include Asp80 and Asp99. Ser117 contributes to the 4-amino-2-methyl-5-(diphosphooxymethyl)pyrimidine binding site. 143–145 (TST) contacts 2-[(2R,5Z)-2-carboxy-4-methylthiazol-5(2H)-ylidene]ethyl phosphate. Lys146 serves as a coordination point for 4-amino-2-methyl-5-(diphosphooxymethyl)pyrimidine. 2-[(2R,5Z)-2-carboxy-4-methylthiazol-5(2H)-ylidene]ethyl phosphate contacts are provided by residues Gly175 and 195 to 196 (IS).

It belongs to the thiamine-phosphate synthase family. Requires Mg(2+) as cofactor.

It carries out the reaction 2-[(2R,5Z)-2-carboxy-4-methylthiazol-5(2H)-ylidene]ethyl phosphate + 4-amino-2-methyl-5-(diphosphooxymethyl)pyrimidine + 2 H(+) = thiamine phosphate + CO2 + diphosphate. The catalysed reaction is 2-(2-carboxy-4-methylthiazol-5-yl)ethyl phosphate + 4-amino-2-methyl-5-(diphosphooxymethyl)pyrimidine + 2 H(+) = thiamine phosphate + CO2 + diphosphate. It catalyses the reaction 4-methyl-5-(2-phosphooxyethyl)-thiazole + 4-amino-2-methyl-5-(diphosphooxymethyl)pyrimidine + H(+) = thiamine phosphate + diphosphate. Its pathway is cofactor biosynthesis; thiamine diphosphate biosynthesis; thiamine phosphate from 4-amino-2-methyl-5-diphosphomethylpyrimidine and 4-methyl-5-(2-phosphoethyl)-thiazole: step 1/1. Its function is as follows. Condenses 4-methyl-5-(beta-hydroxyethyl)thiazole monophosphate (THZ-P) and 2-methyl-4-amino-5-hydroxymethyl pyrimidine pyrophosphate (HMP-PP) to form thiamine monophosphate (TMP). This chain is Thiamine-phosphate synthase, found in Bacillus thuringiensis (strain Al Hakam).